The chain runs to 380 residues: Probable acyl-CoA dehydrogenase YngJ (380 aa).

FAD is bound by residues 123–132 (FGLTEPNAGS), 156–158 (WIT), R269, and 337–341 (QIHGG). E364 acts as the Proton acceptor in catalysis. Residue 366-368 (TSE) participates in FAD binding.

This sequence belongs to the acyl-CoA dehydrogenase family. Requires FAD as cofactor.

The enzyme catalyses a 2,3-saturated acyl-CoA + A = a 2,3-dehydroacyl-CoA + AH2. This Bacillus subtilis (strain 168) protein is Probable acyl-CoA dehydrogenase YngJ (yngJ).